The following is a 443-amino-acid chain: Inactive polypeptide N-acetylgalactosaminyltransferase-like protein 5 (443 aa).

Topologically, residues 1 to 4 are cytoplasmic; the sequence is MRNA. Residues 5-27 traverse the membrane as a helical; Signal-anchor for type II membrane protein segment; that stretch reads IIRCLFYGSLTFGIWTALLFIYL. The Lumenal portion of the chain corresponds to 28 to 443; the sequence is HHNHVSNWQK…PELEASVNRS (416 aa). An N-linked (GlcNAc...) asparagine glycan is attached at Asn87. Disulfide bonds link Cys124-Cys355 and Cys346-Cys422. Residues 133 to 243 form a catalytic subdomain A region; the sequence is LPTASIVICF…RVWLEPLLHA (111 aa). Substrate contacts are provided by Asp174 and Arg204. Asp227 lines the Mn(2+) pocket. Ser228 provides a ligand contact to substrate. Position 229 (His229) interacts with Mn(2+). The catalytic subdomain B stretch occupies residues 301-363; the sequence is PIRSPAMSGG…PCSRVGHISK (63 aa). Trp332 contacts substrate. His360 contacts Mn(2+).

The protein belongs to the glycosyltransferase 2 family. GalNAc-T subfamily. The cofactor is Mn(2+). As to expression, expressed in testis.

The protein resides in the late endosome membrane. Probable inactive glycosyltransferase required during spermatid development. May participate in protein loading into the acrosomes and accumulation of ubiquitin-proteasome systems around the head-tail coupling apparatus region. This Macaca fascicularis (Crab-eating macaque) protein is Inactive polypeptide N-acetylgalactosaminyltransferase-like protein 5 (GALNTL5).